Consider the following 67-residue polypeptide: Putative cytosolic sulfotransferase 2 (67 aa).

3'-phosphoadenylyl sulfate is bound at residue 31–33 (RDG).

It belongs to the sulfotransferase 1 family.

Its subcellular location is the cytoplasm. In terms of biological role, sulfotransferase that utilizes 3'-phospho-5'-adenylyl sulfate (PAPS) as sulfonate donor. In Arabidopsis thaliana (Mouse-ear cress), this protein is Putative cytosolic sulfotransferase 2 (SOT2).